We begin with the raw amino-acid sequence, 332 residues long: UDP-3-O-acylglucosamine N-acyltransferase (332 aa).

Histidine 235 serves as the catalytic Proton acceptor.

The protein belongs to the transferase hexapeptide repeat family. LpxD subfamily. Homotrimer.

The enzyme catalyses a UDP-3-O-[(3R)-3-hydroxyacyl]-alpha-D-glucosamine + a (3R)-hydroxyacyl-[ACP] = a UDP-2-N,3-O-bis[(3R)-3-hydroxyacyl]-alpha-D-glucosamine + holo-[ACP] + H(+). Its pathway is bacterial outer membrane biogenesis; LPS lipid A biosynthesis. Its function is as follows. Catalyzes the N-acylation of UDP-3-O-acylglucosamine using 3-hydroxyacyl-ACP as the acyl donor. Is involved in the biosynthesis of lipid A, a phosphorylated glycolipid that anchors the lipopolysaccharide to the outer membrane of the cell. The protein is UDP-3-O-acylglucosamine N-acyltransferase of Fusobacterium nucleatum subsp. nucleatum (strain ATCC 25586 / DSM 15643 / BCRC 10681 / CIP 101130 / JCM 8532 / KCTC 2640 / LMG 13131 / VPI 4355).